The chain runs to 231 residues: Endonuclease NucS (231 aa).

It belongs to the NucS endonuclease family.

The protein localises to the cytoplasm. Its function is as follows. Cleaves both 3' and 5' ssDNA extremities of branched DNA structures. This is Endonuclease NucS from Arthrobacter sp. (strain FB24).